The chain runs to 418 residues: Tyrosine--tRNA ligase (418 aa).

Residue Tyr-39 coordinates L-tyrosine. Residues 44–53 (CTADSLHVGS) carry the 'HIGH' region motif. Residues Tyr-176 and Gln-180 each contribute to the L-tyrosine site. The short motif at 236–240 (KMGKT) is the 'KMSKS' region element. Lys-239 is a binding site for ATP. Residues 350 to 416 (LPLAEMMRAT…KKRHALIRVL (67 aa)) enclose the S4 RNA-binding domain.

The protein belongs to the class-I aminoacyl-tRNA synthetase family. TyrS type 1 subfamily. In terms of assembly, homodimer.

The protein resides in the cytoplasm. It carries out the reaction tRNA(Tyr) + L-tyrosine + ATP = L-tyrosyl-tRNA(Tyr) + AMP + diphosphate + H(+). Catalyzes the attachment of tyrosine to tRNA(Tyr) in a two-step reaction: tyrosine is first activated by ATP to form Tyr-AMP and then transferred to the acceptor end of tRNA(Tyr). The sequence is that of Tyrosine--tRNA ligase from Rhodospirillum rubrum (strain ATCC 11170 / ATH 1.1.1 / DSM 467 / LMG 4362 / NCIMB 8255 / S1).